We begin with the raw amino-acid sequence, 633 residues long: Dynein axonemal assembly factor 1 (633 aa).

The disordered stretch occupies residues 1–80 (MHPEASEPPV…SRDDRDDRGP (80 aa)). Basic and acidic residues predominate over residues 22 to 42 (AGDHGDAGPGVRKEEINETKE). The segment covering 46-60 (GPCTTSCQSQQQPSG) has biased composition (low complexity). Basic and acidic residues predominate over residues 70–80 (HSRDDRDDRGP). LRR repeat units follow at residues 101 to 123 (ALND…EEYT), 124 to 145 (GLRC…QAQS), 146 to 167 (ELRC…EPLQ), 168 to 189 (KLDA…SCLP), 190 to 211 (VLNT…EHLR), and 215 to 236 (QLCV…SVLE). One can recognise an LRRCT domain in the interval 249 to 288 (NPVTKHIPNYRRTVTVRLKHLTYLDDRPVFPKDRACAEAW). Residues 326–344 (EERKKARDRGETPLPESEK) are compositionally biased toward basic and acidic residues. Disordered stretches follow at residues 326–364 (EERK…TQQK) and 404–436 (LSGN…RTED). Position 349 is a phosphoserine (Ser349). The span at 352 to 364 (AQEKPPKGETQQK) shows a compositional bias: basic and acidic residues. Over residues 413–427 (TPVVVTPEEVTSPVE) the composition is skewed to low complexity. A Phosphothreonine modification is found at Thr462. Phosphoserine occurs at positions 465 and 488. 2 stretches are compositionally biased toward polar residues: residues 538-555 (TTDL…SSHP) and 568-592 (GESN…SEGG). The segment at 538 to 633 (TTDLETQSQD…GLEDIEFGLD (96 aa)) is disordered.

The protein belongs to the DNAAF1 family.

It is found in the cell projection. The protein localises to the cilium. Its function is as follows. Cilium-specific protein required for the stability of the ciliary architecture. Plays a role in cytoplasmic preassembly of dynein arms. Involved in regulation of microtubule-based cilia and actin-based brush border microvilli. This chain is Dynein axonemal assembly factor 1 (Dnaaf1), found in Rattus norvegicus (Rat).